A 581-amino-acid chain; its full sequence is Proline--tRNA ligase (581 aa).

It belongs to the class-II aminoacyl-tRNA synthetase family. ProS type 1 subfamily. As to quaternary structure, homodimer.

It localises to the cytoplasm. The catalysed reaction is tRNA(Pro) + L-proline + ATP = L-prolyl-tRNA(Pro) + AMP + diphosphate. Functionally, catalyzes the attachment of proline to tRNA(Pro) in a two-step reaction: proline is first activated by ATP to form Pro-AMP and then transferred to the acceptor end of tRNA(Pro). As ProRS can inadvertently accommodate and process non-cognate amino acids such as alanine and cysteine, to avoid such errors it has two additional distinct editing activities against alanine. One activity is designated as 'pretransfer' editing and involves the tRNA(Pro)-independent hydrolysis of activated Ala-AMP. The other activity is designated 'posttransfer' editing and involves deacylation of mischarged Ala-tRNA(Pro). The misacylated Cys-tRNA(Pro) is not edited by ProRS. This chain is Proline--tRNA ligase, found in Acidovorax ebreus (strain TPSY) (Diaphorobacter sp. (strain TPSY)).